A 228-amino-acid polypeptide reads, in one-letter code: Small ribosomal subunit protein uS2c (228 aa).

It belongs to the universal ribosomal protein uS2 family.

It is found in the plastid. It localises to the chloroplast. The polypeptide is Small ribosomal subunit protein uS2c (rps2) (Mesostigma viride (Green alga)).